Reading from the N-terminus, the 442-residue chain is Phosphatidylserine synthase 2 (442 aa).

At 1–40 (MRRGERRGPAGPLGDGPALGLRRSTESEVYDDGTNTFFWR) the chain is on the cytoplasmic side. Residues 41–61 (AHTLTVLFILTCALGYVTLLE) traverse the membrane as a helical segment. Topologically, residues 62 to 74 (ETPQDTAYNTKRG) are lumenal. Residues 75-95 (IVASILVFLCFGVTQAKDGPF) traverse the membrane as a helical segment. The Cytoplasmic segment spans residues 96–104 (SRPHPAYWR). Residues 105-125 (FWLCVSVVYELFLIFILFQTV) form a helical membrane-spanning segment. The Lumenal segment spans residues 126 to 291 (QDGRQFMKYI…EWKPASSLRR (166 aa)). Residues Asn159 and Asn215 are each glycosylated (N-linked (GlcNAc...) asparagine). The helical transmembrane segment at 292–312 (WLAVCGIIFVFLLAELNTFYL) threads the bilayer. Residue Lys313 is a topological domain, cytoplasmic. The helical transmembrane segment at 314–334 (FVLWMPPEHYLVLLRLVFFVN) threads the bilayer. Residues 335-354 (VGGVAMREIYDFMDDPKFHK) are Lumenal-facing. The chain crosses the membrane as a helical span at residues 355-375 (KLGQQAWLVAAITATEFLIVV). Residues 376 to 381 (KYDPYT) lie on the Cytoplasmic side of the membrane. Residues 382-402 (LTLSLPFYITQCWILGIILVL) form a helical membrane-spanning segment. Residues 403 to 442 (TWTAWRFFIRDITLRYKEIRRQKQEHKYEKDKCLSNGDGH) are Lumenal-facing.

This sequence belongs to the phosphatidyl serine synthase family.

The protein resides in the endoplasmic reticulum membrane. It carries out the reaction a 1,2-diacyl-sn-glycero-3-phosphoethanolamine + L-serine = a 1,2-diacyl-sn-glycero-3-phospho-L-serine + ethanolamine. The enzyme catalyses 1-hexadecanoyl-2-(9Z-octadecenoyl)-sn-glycero-3-phosphoethanolamine + L-serine = 1-hexadecanoyl-2-(9Z-octadecenoyl)-sn-glycero-3-phospho-L-serine + ethanolamine. The catalysed reaction is 1-hexadecanoyl-2-(4Z,7Z,10Z,13Z,16Z,19Z-docosahexaenoyl)-sn-glycero-3-phosphoethanolamine + L-serine = 1-hexadecanoyl-2-(4Z,7Z,10Z,13Z,16Z,19Z-docosahexaenoyl)-sn-glycero-3-phosphoserine + ethanolamine. It catalyses the reaction 1-octadecanoyl-2-(5Z,8Z,11Z,14Z)-eicosatetraenoyl-sn-glycero-3-phosphoethanolamine + L-serine = 1-octadecanoyl-2-(5Z,8Z,11Z,14Z)-eicosatetraenoyl-sn-glycero-3-phosphoserine + ethanolamine. It carries out the reaction 1-octadecanoyl-2-(4Z,7Z,10Z,13Z,16Z,19Z-docosahexaenoyl)-sn-glycero-3-phosphoethanolamine + L-serine = 1-octadecanoyl-2-(4Z,7Z,10Z,13Z,16Z,19Z-docosahexaenoyl)-sn-glycero-3-phosphoserine + ethanolamine. The enzyme catalyses 1-(1Z-octadecenyl)-2-(4Z,7Z,10Z,13Z,16Z,19Z-docosahexaenoyl)-sn-glycero-3-phosphoethanolamine + L-serine = 1-(1Z-octadecenyl)-2-(4Z,7Z,10Z,13Z,16Z,19Z-docosahexaenoyl)-sn-glycero-3-phospho-L-serine + ethanolamine. The catalysed reaction is 1-octadecanoyl-2-(9Z-octadecenoyl)-sn-glycero-3-phosphoethanolamine + L-serine = 1-octadecanoyl-2-(9Z-octadecenoyl)-sn-glycero-3-phospho-L-serine + ethanolamine. It catalyses the reaction 1-(1Z-octadecenyl)-2-(9Z-octadecenoyl)-sn-glycero-3-phosphoethanolamine + L-serine = 1-(1Z-octadecenyl)-2-(9Z-octadecenoyl)-sn-glycero-3-phospho-L-serine + ethanolamine. It carries out the reaction 1-(1Z-octadecenyl)-2-(5Z,8Z,11Z,14Z- eicosatetraenoyl)-sn-glycero-3-phosphoethanolamine + L-serine = 1-(1Z-octadecenyl)-2-(5Z,8Z,11Z,14Z-eicosatetraenoyl)-sn-glycero-3-phospho-L-serine + ethanolamine. The protein operates within phospholipid metabolism; phosphatidylserine biosynthesis. Catalyzes a base-exchange reaction in which the polar head group of phosphatidylethanolamine (PE) or phosphatidylcholine (PC) is replaced by L-serine. Catalyzes the conversion of phosphatatidylethanolamine and does not act on phosphatidylcholine. Can utilize both phosphatidylethanolamine (PE) plasmalogen and diacyl PE as substrate and the latter is six times better utilized, indicating the importance of an ester linkage at the sn-1 position. Although it shows no sn-1 fatty acyl preference, exhibits significant preference towards docosahexaenoic acid (22:6n-3) compared with 18:1 or 20:4 at the sn-2 position. The sequence is that of Phosphatidylserine synthase 2 (PTDSS1) from Gallus gallus (Chicken).